The sequence spans 429 residues: tRNA-2-methylthio-N(6)-dimethylallyladenosine synthase (429 aa).

The MTTase N-terminal domain maps to 2-115; the sequence is KLLYLQTLGC…ISEAVKTPKF (114 aa). [4Fe-4S] cluster contacts are provided by C11, C46, C78, C147, C151, and C154. The Radical SAM core domain occupies 133 to 365; the sequence is RGSPYKAFVN…QSRHNEILDE (233 aa). Positions 368-429 constitute a TRAM domain; it reads KNQVGKIFDV…RMVLYGKITA (62 aa).

Belongs to the methylthiotransferase family. MiaB subfamily. Monomer. [4Fe-4S] cluster is required as a cofactor.

It localises to the cytoplasm. The catalysed reaction is N(6)-dimethylallyladenosine(37) in tRNA + (sulfur carrier)-SH + AH2 + 2 S-adenosyl-L-methionine = 2-methylsulfanyl-N(6)-dimethylallyladenosine(37) in tRNA + (sulfur carrier)-H + 5'-deoxyadenosine + L-methionine + A + S-adenosyl-L-homocysteine + 2 H(+). In terms of biological role, catalyzes the methylthiolation of N6-(dimethylallyl)adenosine (i(6)A), leading to the formation of 2-methylthio-N6-(dimethylallyl)adenosine (ms(2)i(6)A) at position 37 in tRNAs that read codons beginning with uridine. The sequence is that of tRNA-2-methylthio-N(6)-dimethylallyladenosine synthase from Campylobacter hominis (strain ATCC BAA-381 / DSM 21671 / CCUG 45161 / LMG 19568 / NCTC 13146 / CH001A).